The chain runs to 554 residues: Asparagine--tRNA ligase, cytoplasmic (554 aa).

It belongs to the class-II aminoacyl-tRNA synthetase family.

It is found in the cytoplasm. The protein resides in the cytosol. It carries out the reaction tRNA(Asn) + L-asparagine + ATP = L-asparaginyl-tRNA(Asn) + AMP + diphosphate + H(+). Its function is as follows. Catalyzes the attachment of asparagine to tRNA(Asn) in a two-step reaction: asparagine is first activated by ATP to form Asn-AMP and then transferred to the acceptor end of tRNA(Asn). This is Asparagine--tRNA ligase, cytoplasmic from Saccharomyces cerevisiae (strain ATCC 204508 / S288c) (Baker's yeast).